Reading from the N-terminus, the 376-residue chain is Zinc transporter 7 (376 aa).

Residues 1–37 lie on the Cytoplasmic side of the membrane; it reads MLPLSIKDDEYKPPKFNLFGKISGWFRSILSDKTSRN. Residues 38 to 58 traverse the membrane as a helical segment; the sequence is LFFFLCLNLSFAFVELLYGIW. The Lumenal portion of the chain corresponds to 59–67; that stretch reads SNCLGLISD. Residues 68-88 traverse the membrane as a helical segment; sequence SFHMFFDSTAILAGLAASVIS. At 89–102 the chain is on the cytoplasmic side; the sequence is KWRDNDAFSYGYVR. A helical transmembrane segment spans residues 103 to 123; sequence AEVLAGFVNGLFLIFTAFFIF. The Lumenal portion of the chain corresponds to 124-140; that stretch reads SEGVERALAPPDVHHER. A helical transmembrane segment spans residues 141–161; the sequence is LLLVSILGFVVNLIGIFVFKH. Residues 161 to 218 are his-rich loop; it reads HGGHGHSHGSGHGHSHSLFNGALDQAHGHVDHCHSHEVKHGAAHSHDHAHGHGHFHSH. Over 162 to 236 the chain is Cytoplasmic; that stretch reads GGHGHSHGSG…TGPSRQILQG (75 aa). The segment covering 194–222 has biased composition (basic and acidic residues); that stretch reads HSHEVKHGAAHSHDHAHGHGHFHSHDGPS. Positions 194–226 are disordered; sequence HSHEVKHGAAHSHDHAHGHGHFHSHDGPSLKET. The chain crosses the membrane as a helical span at residues 237–257; that stretch reads VFLHILADTLGSIGVIASAIM. The Lumenal portion of the chain corresponds to 258–262; it reads MQNFG. A helical transmembrane segment spans residues 263 to 283; that stretch reads LMIADPICSILIAILIVVSVI. Residues 284 to 376 are Cytoplasmic-facing; that stretch reads PLLRESVGIL…LYVQIDFAAM (93 aa).

The protein belongs to the cation diffusion facilitator (CDF) transporter (TC 2.A.4) family. SLC30A subfamily. Homooligomer. As to expression, highly expressed in megakaryocytes and other bone marrow cells and in the epithelium of the small intestine. Expressed in testis (in Leydig cells), adrenal gland (in adrenal medula, zona fasciculata and zona of reticularis), and pituitary gland (in somatotropic cells).

It localises to the golgi apparatus membrane. The protein resides in the cytoplasmic vesicle. Its subcellular location is the golgi apparatus. It is found in the trans-Golgi network. The protein localises to the sarcoplasmic reticulum. It localises to the mitochondrion. It carries out the reaction Zn(2+)(in) = Zn(2+)(out). In terms of biological role, zinc ion transporter mediating zinc entry from the cytosol into the lumen of organelles along the secretory pathway. By contributing to zinc ion homeostasis within the early secretory pathway, regulates the activation and folding of enzymes like alkaline phosphatases. The protein is Zinc transporter 7 of Homo sapiens (Human).